We begin with the raw amino-acid sequence, 743 residues long: Homeobox-leucine zipper protein PROTODERMAL FACTOR 2 (743 aa).

The interval 1–72 (MYHPNMFESH…KKRYHRHTQR (72 aa)) is disordered. Positions 30–39 (SREDDFETKS) are enriched in basic and acidic residues. The segment covering 60-71 (PNKKKRYHRHTQ) has biased composition (basic residues). Residues 62–121 (KKKRYHRHTQRQIQELESFFKECPHPDDKQRKELSRDLNLEPLQVKFWFQNKRTQMKAQS) constitute a DNA-binding region (homeobox). A coiled-coil region spans residues 110–192 (FQNKRTQMKA…DRISAIAAKY (83 aa)). The START domain maps to 244-476 (SETDKPIIVE…LERQCERLAS (233 aa)).

This sequence belongs to the HD-ZIP homeobox family. Class IV subfamily. Interacts with GAI/RGA2, RGA/RGA1/GRS, RGL2/SCL19 and ATML1. Binds to AIL7/PLT7, ANT, BBM and AIL1. Specifically expressed in the layer 1 (L1) of shoot meristems.

The protein resides in the nucleus. Its function is as follows. Probable transcription factor that binds to the L1 box DNA sequence 5'-TAAATG[CT]A-3'. Plays a role in maintaining the identity of L1 cells, possibly by interacting with their L1 box or other target-gene promoters; binds to the LIP1 gene promoter and stimulates its expression upon imbibition. Acts as a positive regulator of gibberellins (GAs)-regulated epidermal gene expression (e.g. LIP1, LIP2, LTP1, FDH and PDF1). Functionally redundant to ATML1. Involved, together with HDG proteins (e.g. HDG1, HDG2, HDG5 and HDG12), in the regulation of flower organs development by promoting the expression of APETALA 3 (AP3) in the epidermis and internal cell layers of developing flowers. Seems to promote cell differentiation. The protein is Homeobox-leucine zipper protein PROTODERMAL FACTOR 2 of Arabidopsis thaliana (Mouse-ear cress).